We begin with the raw amino-acid sequence, 111 residues long: Heavy metal-associated isoprenylated plant protein 10 (111 aa).

One can recognise an HMA domain in the interval 1–68 (MQETVVFEWG…ICDYVDITAV (68 aa)). Residues 68–111 (VGPEGQPAQNRNPVKKPEPKVIRGRPYPPQKKTPGKNSDECIIL) are disordered. Residue Cys108 is modified to Cysteine methyl ester. Cys108 carries S-farnesyl cysteine lipidation. The propeptide at 109–111 (IIL) is removed in mature form.

The protein belongs to the HIPP family.

Probable heavy-metal-binding protein. This Arabidopsis thaliana (Mouse-ear cress) protein is Heavy metal-associated isoprenylated plant protein 10.